A 363-amino-acid chain; its full sequence is Outer membrane porin F (363 aa).

Positions 1–22 (MMKRKILAAVIPALLAAATANA) are cleaved as a signal peptide. A beta stranded membrane pass occupies residues 23–28 (AEIYNK). A topological domain (periplasmic) is located at residue aspartate 29. A beta stranded transmembrane segment spans residues 30 to 45 (GNKLDLYGKAVGRHVW). Topologically, residues 46–56 (TTTGDSKNADQ) are extracellular. Residues 57–69 (TYAQIGFKGETQI) traverse the membrane as a beta stranded segment. Residues 70 to 71 (NT) lie on the Periplasmic side of the membrane. A beta stranded membrane pass occupies residues 72–84 (DLTGFGQWEYRTK). Topologically, residues 85-99 (ADRAEGEQQNSNLVR) are extracellular. The beta stranded transmembrane segment at 100 to 108 (LAFAGLKYA) threads the bilayer. Glutamate 109 is a topological domain (periplasmic). A beta stranded transmembrane segment spans residues 110 to 117 (VGSIDYGR). The Extracellular segment spans residues 118–154 (NYGIVYDVESYTDMAPYFSGETWGGAYTDNYMTSRAG). The beta stranded transmembrane segment at 155–161 (GLLTYRN) threads the bilayer. Residues 162 to 169 (SDFFGLVD) are Periplasmic-facing. A beta stranded membrane pass occupies residues 170 to 181 (GLSFGIQYQGKN). Over 182–192 (QDNHSINSQNG) the chain is Extracellular. The chain crosses the membrane as a beta stranded span at residues 193–203 (DGVGYTMAYEF). Position 204 (aspartate 204) is a topological domain, periplasmic. The chain crosses the membrane as a beta stranded span at residues 205–217 (GFGVTAAYSNSKR). Topologically, residues 218 to 230 (TNDQQDRDGNGDR) are extracellular. Residues 231 to 242 (AESWAVGAKYDA) form a beta stranded membrane-spanning segment. Residue asparagine 243 is a topological domain, periplasmic. Residues 244–256 (NVYLAAVYAETRN) traverse the membrane as a beta stranded segment. Residues 257–272 (MSIVENTVTDTVEMAN) are Extracellular-facing. A beta stranded membrane pass occupies residues 273–285 (KTQNLEVVAQYQF). Residues 286–287 (DF) are Periplasmic-facing. The chain crosses the membrane as a beta stranded span at residues 288-301 (GLRPAISYVQSKGK). Topologically, residues 302 to 312 (QLNGADGSADL) are extracellular. Residues 313-324 (AKYIQAGATYYF) traverse the membrane as a beta stranded segment. Over 325-326 (NK) the chain is Periplasmic. The chain crosses the membrane as a beta stranded span at residues 327–336 (NMNVWVDYRF). Residues 337 to 353 (NLLDENDYSSSYVGTDD) are Extracellular-facing. The chain crosses the membrane as a beta stranded span at residues 354–363 (QAAVGITYQF).

It belongs to the Gram-negative porin family. As to quaternary structure, homotrimer. Forms mixed heterotrimers with OmpC and with PhoE; other mixed heterotrimers with other porins are also probable.

The protein resides in the cell outer membrane. In terms of biological role, forms pores that allow passive diffusion of small molecules across the outer membrane. This Salmonella typhi protein is Outer membrane porin F (ompF).